We begin with the raw amino-acid sequence, 252 residues long: MSRKPIIAGNWKMNKNPQEAKAFVEAVASKLPSTDLVDVAVAAPAVDLVTTIEAAKDSVLKVAAQNCYFENTGAFTGETSPKVLAEMGADYVVIGHSERRDYFHETDEDINKKAKAIFANGLTPIICCGESLETYEAGKAAEFVGAQVSAALAGLSAEQVASLVLAYEPIWAIGTGKSATQDDAQNMCKAVRDVVAADFGQEVADKVRVQYGGSVKPENVKDYMACPDVDGALVGGASLEADSFLALLDFLN.

10–12 (NWK) is a binding site for substrate. Residue H96 is the Electrophile of the active site. E168 acts as the Proton acceptor in catalysis. Residues G174, S214, and 235-236 (GG) contribute to the substrate site.

This sequence belongs to the triosephosphate isomerase family. Homodimer.

It localises to the cytoplasm. The enzyme catalyses D-glyceraldehyde 3-phosphate = dihydroxyacetone phosphate. It participates in carbohydrate biosynthesis; gluconeogenesis. Its pathway is carbohydrate degradation; glycolysis; D-glyceraldehyde 3-phosphate from glycerone phosphate: step 1/1. Functionally, involved in the gluconeogenesis. Catalyzes stereospecifically the conversion of dihydroxyacetone phosphate (DHAP) to D-glyceraldehyde-3-phosphate (G3P). This chain is Triosephosphate isomerase, found in Streptococcus pyogenes serotype M18 (strain MGAS8232).